The sequence spans 252 residues: 3-dehydroquinate dehydratase (252 aa).

Residues Ser21, 46-48, and Arg82 each bind 3-dehydroquinate; that span reads EWR. The active-site Proton donor/acceptor is the His143. Residue Lys170 is the Schiff-base intermediate with substrate of the active site. The 3-dehydroquinate site is built by Arg213, Ser232, and Gln236.

This sequence belongs to the type-I 3-dehydroquinase family. Homodimer.

The enzyme catalyses 3-dehydroquinate = 3-dehydroshikimate + H2O. The protein operates within metabolic intermediate biosynthesis; chorismate biosynthesis; chorismate from D-erythrose 4-phosphate and phosphoenolpyruvate: step 3/7. Involved in the third step of the chorismate pathway, which leads to the biosynthesis of aromatic amino acids. Catalyzes the cis-dehydration of 3-dehydroquinate (DHQ) and introduces the first double bond of the aromatic ring to yield 3-dehydroshikimate. This Shigella sonnei (strain Ss046) protein is 3-dehydroquinate dehydratase.